Here is a 114-residue protein sequence, read N- to C-terminus: Fumarate reductase subunit D (114 aa).

The next 3 membrane-spanning stretches (helical) occupy residues valine 24 to leucine 44, leucine 50 to proline 70, and glycine 92 to isoleucine 112.

Belongs to the FrdD family. Part of an enzyme complex containing four subunits: a flavoprotein (FrdA), an iron-sulfur protein (FrdB), and two hydrophobic anchor proteins (FrdC and FrdD).

It is found in the cell inner membrane. Its function is as follows. Anchors the catalytic components of the fumarate reductase complex to the cell membrane, binds quinones. This Haemophilus influenzae (strain 86-028NP) protein is Fumarate reductase subunit D.